The sequence spans 110 residues: MHNEKGKNGDEYRHDAFIMPKMRSKLQKPKLYRVLLLDDDYTPMDFVIFVLKSFFKKNFEEAMHIMLSVHQNGVGECGIYNYEVAEMKIIQVRECARQNEHPLQCVMEWK.

It belongs to the ClpS family. In terms of assembly, binds to the N-terminal domain of the chaperone ClpA.

In terms of biological role, involved in the modulation of the specificity of the ClpAP-mediated ATP-dependent protein degradation. The protein is ATP-dependent Clp protease adapter protein ClpS of Bartonella henselae (strain ATCC 49882 / DSM 28221 / CCUG 30454 / Houston 1) (Rochalimaea henselae).